The sequence spans 156 residues: Small ribosomal subunit protein uS7 (156 aa).

It belongs to the universal ribosomal protein uS7 family. As to quaternary structure, part of the 30S ribosomal subunit. Contacts proteins S9 and S11.

One of the primary rRNA binding proteins, it binds directly to 16S rRNA where it nucleates assembly of the head domain of the 30S subunit. Is located at the subunit interface close to the decoding center, probably blocks exit of the E-site tRNA. The sequence is that of Small ribosomal subunit protein uS7 from Haemophilus influenzae (strain 86-028NP).